The following is a 505-amino-acid chain: ATP synthase subunit beta, mitochondrial (505 aa).

The N-terminal 31 residues, 1-31, are a transit peptide targeting the mitochondrion; it reads MFALRAASKADKNLLPFLGQLSRSHAAKAAK. 183–190 serves as a coordination point for ATP; it reads GGAGVGKT.

This sequence belongs to the ATPase alpha/beta chains family. In terms of assembly, F-type ATPases have 2 components, CF(1) - the catalytic core - and CF(0) - the membrane proton channel. CF(1) has five subunits: alpha(3), beta(3), gamma(1), delta(1), epsilon(1). CF(0) has three main subunits: a, b and c.

Its subcellular location is the mitochondrion. The protein resides in the mitochondrion inner membrane. It carries out the reaction ATP + H2O + 4 H(+)(in) = ADP + phosphate + 5 H(+)(out). Its function is as follows. Mitochondrial membrane ATP synthase (F(1)F(0) ATP synthase or Complex V) produces ATP from ADP in the presence of a proton gradient across the membrane which is generated by electron transport complexes of the respiratory chain. F-type ATPases consist of two structural domains, F(1) - containing the extramembraneous catalytic core, and F(0) - containing the membrane proton channel, linked together by a central stalk and a peripheral stalk. During catalysis, ATP synthesis in the catalytic domain of F(1) is coupled via a rotary mechanism of the central stalk subunits to proton translocation. Subunits alpha and beta form the catalytic core in F(1). Rotation of the central stalk against the surrounding alpha(3)beta(3) subunits leads to hydrolysis of ATP in three separate catalytic sites on the beta subunits. This is ATP synthase subunit beta, mitochondrial from Drosophila melanogaster (Fruit fly).